A 429-amino-acid polypeptide reads, in one-letter code: Carboxypeptidase B (429 aa).

The signal sequence occupies residues 1-15 (MKFLLVLALCAVVYA). The Peptidase M14 domain occupies 121–423 (NYQELEVIDE…EGIVVGARRA (303 aa)). Positions 182 and 185 each coordinate Zn(2+). Substrate is bound by residues 182-185 (HARE), Arg-236, and 256-257 (NR). A disulfide bond links Cys-250 and Cys-273. Residue His-309 coordinates Zn(2+). Residues 310 to 311 (SF) and Tyr-365 contribute to the substrate site. The Proton donor/acceptor role is filled by Glu-387.

This sequence belongs to the peptidase M14 family. The cofactor is Zn(2+).

The protein localises to the secreted. It catalyses the reaction Preferential release of a C-terminal lysine or arginine amino acid.. With respect to regulation, highly resistant to inhibition by potato carboxypeptidase inhibitor (PCI). Moderately inhibited by leech carboxypeptidase inhibitor (LCI) and tick carboxypeptidase inhibitor (TCI). Its function is as follows. Metalloprotease which cleaves a single amino acid from the C-terminal end of polypeptide chains. Shows a strong preference for peptides with a terminal lysine residue. This is Carboxypeptidase B from Helicoverpa zea (Corn earworm moth).